Here is a 448-residue protein sequence, read N- to C-terminus: MKLEIIAIGGYEEVGRNMTAVNVDGEIIILDMGIRLDRVLIHEDTDISKLHSLELIEKGIIPNDTVMKNIEGEVKAIVLSHGHLDHIGAVPKLAHRYNAPIIGTPYTIELVKREILSEKKFDVRNPLIVLNAGESIDLTPNITLEFIRITHSIPDSVLPVLHTPYGSIVYGNDFKFDNFPVVGERPDYRAIKKVGKNGVLCFISETTRINHEGKTPPEIIASGLLKNDLLAADNDKHGIIVTTFSSHIARIKSITDIAEKMGRTPVLLGRSMMRFCGIAQDIGLVKFPEDLRIYGDPSSIEMALKNIVKEGKEKYLIIATGHQGEEGAVLSRMATNKTPYKFEKYDCVVFSADPIPNPMNAAQRYMLESRLKLLGVRIFKGAHVSGHAAKEDHRDMLRWLNPEHIIPSHGDFNLTAEYTKLAEEEGYRLGEDVHLLRNGQCLSFERII.

Positions 81, 83, 85, 86, 151, and 173 each coordinate Zn(2+). 383 to 387 is a substrate binding site; sequence HVSGH. Residue histidine 409 participates in Zn(2+) binding.

Belongs to the metallo-beta-lactamase superfamily. RNA-metabolizing metallo-beta-lactamase-like family. Archaeal RNase J subfamily. Forms homodimers on heating to 60 degrees Celsius which may be the active form. It depends on Zn(2+) as a cofactor.

It localises to the cytoplasm. With respect to regulation, inhibited by imidazole. Its function is as follows. A 5'-3' exoribonuclease with a strong reference for 5'-monophosphorylated RNA and no endoribonuclease activty. Also has robust 5'-'3 nuclease activity on single-stranded DNA (exodeoxyribonuclease, exoDNase). May be involved in RNA degradation. This Methanocaldococcus jannaschii (strain ATCC 43067 / DSM 2661 / JAL-1 / JCM 10045 / NBRC 100440) (Methanococcus jannaschii) protein is Ribonuclease J.